Consider the following 218-residue polypeptide: Cytochrome b6 (218 aa).

The chain crosses the membrane as a helical span at residues 35–55 (IFYCLGGITLVCFLIQFATGF). Position 38 (C38) interacts with heme c. Positions 89 and 103 each coordinate heme b. The next 3 membrane-spanning stretches (helical) occupy residues 93 to 113 (ASMMVLMLILHVFRVYLTGGF), 119 to 139 (LTWVTGVVMAVITVAFGVTGY), and 189 to 209 (LHTFVLPWSLAVFMLMHFLMI). Heme b is bound by residues H190 and H205.

The protein belongs to the cytochrome b family. PetB subfamily. In terms of assembly, the 4 large subunits of the cytochrome b6-f complex are cytochrome b6, subunit IV (17 kDa polypeptide, PetD), cytochrome f and the Rieske protein, while the 4 small subunits are PetG, PetL, PetM and PetN. The complex functions as a dimer. Heme b serves as cofactor. It depends on heme c as a cofactor.

Its subcellular location is the cellular thylakoid membrane. Its function is as follows. Component of the cytochrome b6-f complex, which mediates electron transfer between photosystem II (PSII) and photosystem I (PSI), cyclic electron flow around PSI, and state transitions. This Prochlorococcus marinus subsp. pastoris (strain CCMP1986 / NIES-2087 / MED4) protein is Cytochrome b6.